The sequence spans 320 residues: uncharacterized protein (320 aa).

The next 7 membrane-spanning stretches (helical) occupy residues 24-44 (FEFSVHGTCVVFNLFLCIFFI), 65-85 (FVLSLPLFFLQFYLVVFLWSL), 105-125 (TTSCAQVLPLAVAIYRYFIVV), 132-152 (SWFVVVVHSIISFIFFVIAIL), 179-199 (ISLTLGLNLFAVFINVAIYTF), 226-246 (MIPILVSIPLLVGSFDFYFGY), and 253-275 (TSRWYATTFLSPLLTPISSMLSL).

The protein resides in the membrane. This is an uncharacterized protein from Caenorhabditis elegans.